Reading from the N-terminus, the 260-residue chain is ProSAAS (260 aa).

An N-terminal signal peptide occupies residues methionine 1–serine 33. A proSAAS(1-180) region spans residues alanine 34–proline 215. Disordered stretches follow at residues alanine 162–threonine 187 and serine 206–asparagine 234. The interval alanine 221–proline 260 is C-terminal inhibitory domain; interacts with PCSK1. Residues leucine 239 to arginine 244 carry the Sufficient for inhibition of PCSK1 motif.

Interacts via the C-terminal inhibitory domain with PCSK1 65 kDa form. In terms of processing, proteolytically cleaved in the Golgi. Big SAAS, Little SAAS, PEN and Big LEN are the major processed peptides in proSAAS-overexpressing PC-12 phaeochromocytoma cells (lacking PCSK1 and PCSK2 endopeptidases). Peptides corresponding to PEN and a proSAAS aa 40-59 have been detected in wild-type PC-12 cells. As to expression, expressed in adult brain (all major structural regions), adrenal gland (medulla) and spinal cord (dorsal and ventral horn). Expressed in pancreatic islands.

It is found in the secreted. It localises to the golgi apparatus. The protein localises to the trans-Golgi network. Its function is as follows. May function in the control of the neuroendocrine secretory pathway. Proposed be a specific endogenous inhibitor of PCSK1. ProSAAS and Big PEN-LEN, both containing the C-terminal inhibitory domain, but not the processed peptides reduce PCSK1 activity in the endoplasmic reticulum and Golgi. It reduces the activity of the 87 kDa form but not the autocatalytically derived 65 kDa form of PCSK1. Subsequent processing of proSAAS may eliminate the inhibition. Slows down convertase-mediated processing of proopiomelanocortin and proenkephalin. May control the intracellular timing of PCSK1 rather than its total level of activity. Endogenous ligand for GPR171. Neuropeptide involved in the regulation of feeding. The protein is ProSAAS (Pcsk1n) of Rattus norvegicus (Rat).